The sequence spans 1458 residues: Probable serine/threonine-protein kinase yakA (1458 aa).

Residues 32–76 show a composition bias toward low complexity; that stretch reads NNSLNSNDNTNTTNNNNNNNNNNNNNNNNNNNNNNNNNINNNNNN. Residues 32 to 83 form a disordered region; it reads NNSLNSNDNTNTTNNNNNNNNNNNNNNNNNNNNNNNNNINNNNNNGGMVGVN. Positions 205 to 548 constitute a Protein kinase domain; it reads YKVLDSLGQG…PMQAKEHPFI (344 aa). Residues 211–219 and lysine 234 each bind ATP; that span reads LGQGTFGQV. Aspartate 332 serves as the catalytic Proton acceptor. Disordered stretches follow at residues 441-462 and 545-571; these read HRHL…NGKP and HPFI…TYSQ. Over residues 446-459 the composition is skewed to low complexity; sequence SNSDDNNNNNNNNN. A coiled-coil region spans residues 588-643; the sequence is NQHQLFQQLQQQQQQQQQQQQQQQQQQQQQQQQQQQQQQHNQFQQQQQQQQQQQQS. Composition is skewed to low complexity over residues 659–709, 791–800, 808–853, and 861–870; these read TPYT…SFNF, SWGSDSSSIS, QKQM…NNVN, and DIPSDSFSSS. 2 disordered regions span residues 659–714 and 791–874; these read TPYT…NESF and SWGS…EGMD. Residues 878 to 927 are a coiled coil; it reads NLYQQQQQQQQQQQQQQQQQQQQQQQQQQQQQQQQQQLQYQQQFQTLQDL. 5 disordered regions span residues 930–1095, 1128–1161, 1233–1347, 1375–1399, and 1435–1458; these read EGEK…PQMI, NQQN…GGAI, DYRP…SYQY, QQQQ…KTSS, and QQLQ…YRET. 3 stretches are compositionally biased toward low complexity: residues 961-988, 1016-1042, and 1064-1093; these read QQTN…QQQQ, QQFQ…RFMQ, and QPLH…FTPQ. 2 stretches are compositionally biased toward polar residues: residues 1128–1158 and 1233–1245; these read NQQN…NSSG and DYRP…QSPP. Low complexity-rich tracts occupy residues 1246-1255 and 1264-1279; these read SSYNSNKSFY and NNNN…NFSN. Polar residues predominate over residues 1280–1291; that stretch reads SLLPSQQQNVIF. The segment covering 1292–1309 has biased composition (low complexity); sequence PQNSPPSSYNSSNSLSKS. Composition is skewed to polar residues over residues 1310 to 1321 and 1331 to 1344; these read GGNTVKNNSNTG and QRFN…SGGS. Coiled coils occupy residues 1346 to 1383 and 1409 to 1442; these read QYQQ…KKDT and RYQY…QQQA.

This sequence belongs to the protein kinase superfamily. CMGC Ser/Thr protein kinase family. MNB/DYRK subfamily.

The protein localises to the cytoplasm. It carries out the reaction L-seryl-[protein] + ATP = O-phospho-L-seryl-[protein] + ADP + H(+). The enzyme catalyses L-threonyl-[protein] + ATP = O-phospho-L-threonyl-[protein] + ADP + H(+). It catalyses the reaction L-tyrosyl-[protein] + ATP = O-phospho-L-tyrosyl-[protein] + ADP + H(+). General sensor of environmental conditions, such as heat stress, effecting changes through pkaC. Essential for survival to nitrosoative and oxidative stresses. Required for cell cycle control, not only at the onset but also during development (aggregation process and postaggregative development). In Dictyostelium discoideum (Social amoeba), this protein is Probable serine/threonine-protein kinase yakA (yakA).